Here is a 158-residue protein sequence, read N- to C-terminus: Putative pre-16S rRNA nuclease (158 aa).

This sequence belongs to the YqgF nuclease family.

The protein resides in the cytoplasm. In terms of biological role, could be a nuclease involved in processing of the 5'-end of pre-16S rRNA. This chain is Putative pre-16S rRNA nuclease, found in Hahella chejuensis (strain KCTC 2396).